Reading from the N-terminus, the 805-residue chain is Sucrose synthase (805 aa).

The segment at 275 to 752 (MVFNVVILSP…GLQRIEEKYT (478 aa)) is GT-B glycosyltransferase.

The protein belongs to the glycosyltransferase 1 family. Plant sucrose synthase subfamily.

The enzyme catalyses an NDP-alpha-D-glucose + D-fructose = a ribonucleoside 5'-diphosphate + sucrose + H(+). Sucrose-cleaving enzyme that provides UDP-glucose and fructose for various metabolic pathways. This Vigna radiata var. radiata (Mung bean) protein is Sucrose synthase (SS1).